The primary structure comprises 113 residues: Hydrogenase maturation factor HybF (113 aa).

Residues H2 and E3 each coordinate Ni(2+). Zn(2+) is bound by residues C73, C76, C89, and C92.

The protein belongs to the HypA/HybF family. HybF subfamily.

Its function is as follows. Involved in the maturation of [NiFe] hydrogenases. Required for nickel insertion into the metal center of the hydrogenase. In Klebsiella pneumoniae, this protein is Hydrogenase maturation factor HybF.